Consider the following 82-residue polypeptide: Sodium channel neurotoxin MeuNaTxalpha-3 (82 aa).

An N-terminal signal peptide occupies residues 1–8; that stretch reads LVMAGVES. The 71-residue stretch at 10 to 80 folds into the LCN-type CS-alpha/beta domain; it reads RDGHIARNNN…VPIKVPGDCH (71 aa). Cystine bridges form between C20/C79, C24/C52, C38/C62, and C42/C64.

As to expression, expressed by the venom gland.

It localises to the secreted. Alpha toxins bind voltage-independently at site-3 of sodium channels (Nav) and inhibit the inactivation of the activated channels, thereby blocking neuronal transmission. This is Sodium channel neurotoxin MeuNaTxalpha-3 from Mesobuthus eupeus (Lesser Asian scorpion).